Reading from the N-terminus, the 211-residue chain is Protein-methionine-sulfoxide reductase heme-binding subunit MsrQ (211 aa).

6 helical membrane-spanning segments follow: residues 10–30 (WLKV…VWAI), 54–74 (FLLA…PLLI), 82–102 (LWCF…ELGV), 116–136 (PYLT…FTST), 153–173 (FVYL…KIIS), and 178–198 (IYAG…LSLF).

It belongs to the MsrQ family. As to quaternary structure, heterodimer of a catalytic subunit (MsrP) and a heme-binding subunit (MsrQ). FMN is required as a cofactor. It depends on heme b as a cofactor.

It localises to the cell inner membrane. Functionally, part of the MsrPQ system that repairs oxidized periplasmic proteins containing methionine sulfoxide residues (Met-O), using respiratory chain electrons. Thus protects these proteins from oxidative-stress damage caused by reactive species of oxygen and chlorine generated by the host defense mechanisms. MsrPQ is essential for the maintenance of envelope integrity under bleach stress, rescuing a wide series of structurally unrelated periplasmic proteins from methionine oxidation, including the primary periplasmic chaperone SurA and the lipoprotein Pal. MsrQ provides electrons for reduction to the reductase catalytic subunit MsrP, using the quinone pool of the respiratory chain. The sequence is that of Protein-methionine-sulfoxide reductase heme-binding subunit MsrQ from Escherichia coli O6:H1 (strain CFT073 / ATCC 700928 / UPEC).